We begin with the raw amino-acid sequence, 86 residues long: Putative regulatory protein OB1501 (86 aa).

Belongs to the RemA family.

In Oceanobacillus iheyensis (strain DSM 14371 / CIP 107618 / JCM 11309 / KCTC 3954 / HTE831), this protein is Putative regulatory protein OB1501.